Here is a 299-residue protein sequence, read N- to C-terminus: Non-structural protein V (299 aa).

Residues 40 to 94 (SDNPGQDRATCKEEEAGSSGLSKPCLSAIGSTEGGAPRIRGQGSGESDDDAETLG) are disordered. The segment at 110–120 (YHVYDHSGEAV) is interaction with host STAT1. Low complexity predominate over residues 133–143 (SGLDGDSTLSG). Disordered stretches follow at residues 133–168 (SGLDGDSTLSGGDDESENSDVDIGEPDTEGYAITDR) and 204–229 (PKLGKTLNVPPPPNPSRASTSETPIK). Acidic residues predominate over residues 144–160 (GDDESENSDVDIGEPDT). Residues histidine 232, cysteine 251, cysteine 255, cysteine 267, cysteine 269, cysteine 272, cysteine 276, and cysteine 279 each contribute to the Zn(2+) site.

It belongs to the paramyxoviruses V protein family. As to quaternary structure, interacts with host IFIH1/MDA5 and DHX58/LGP2; these interactions are involved in the inhibition of the host type I interferon signaling pathway. Interacts with host TYK2; this interaction inhibits the type I interferon signaling pathway without affecting the type II pathway. Interacts with host IRF7; this interaction inhibits IRF7 translocation to the nucleus. Interacts with host CHUK. Interacts with host RELA/p65; this interaction inhibits the nuclear translocation of NF-KappaB. Interacts (via N-terminus) with host STAT1 and JAK1; these interactions inhibit STAT1 phosphorylation by Jak1 and thereby the type I interferon signaling pathway. Interacts (via C-terminus) with host STAT2; this interaction is involved in the inhibition of the host type I interferon signaling pathway. Forms a complex with host PPP1CA and PPP1CC; this interaction prevents dephosphorylation of host IFIH1/MDA5 and leads to the inhibition of the host type I interferon signaling pathway. Interacts with host IRF9; this interaction prevents the binding of IRF9 to STAT2 and thereby the type I interferon signaling pathway. Interacts with host RIGI regulatory protein (via CARDs domain) and host TRIM25 (via SPRY domain); these interactions prevent TRIM25-mediated ubiquitination of RIG-I and disrupts downstream RIG-I signaling.

Its subcellular location is the host cytoplasm. Functionally, plays an essential role in the inhibition of host immune response. Prevents the establishment of cellular antiviral state by blocking interferon-alpha/beta (IFN-alpha/beta) production and signaling pathway. Interacts with host IFIH1/MDA5 and DHX58/LGP2 to inhibit the transduction pathway involved in the activation of IFN-beta promoter, thus protecting the virus against cell antiviral state. Blocks the type I interferon signaling pathway by interacting with host TYK2 and thereby inhibiting downstream STAT1 and STAT2 phosphorylation. Blocks the type I interferon signaling pathway by disrupting the RIG-I signaling pathway. Moderately affects the type II interferon signaling. Prevents PP1alpha/gamma-mediated dephosphorylation of host IFIH1/MDA5 and thus blocks its activation. This is Non-structural protein V (P/V) from Homo sapiens (Human).